Here is a 322-residue protein sequence, read N- to C-terminus: Gluconeogenesis factor (322 aa).

It belongs to the gluconeogenesis factor family.

It is found in the cytoplasm. Its function is as follows. Required for morphogenesis under gluconeogenic growth conditions. The chain is Gluconeogenesis factor from Listeria innocua serovar 6a (strain ATCC BAA-680 / CLIP 11262).